The primary structure comprises 388 residues: Cystathionine gamma-synthase (388 aa).

At lysine 208 the chain carries N6-(pyridoxal phosphate)lysine.

Belongs to the trans-sulfuration enzymes family. As to quaternary structure, homotetramer. Requires pyridoxal 5'-phosphate as cofactor.

It localises to the cytoplasm. It catalyses the reaction O-succinyl-L-homoserine + L-cysteine = L,L-cystathionine + succinate + H(+). Its function is as follows. Catalyzes the formation of L-cystathionine from O-succinyl-L-homoserine (OSHS) and L-cysteine, via a gamma-replacement reaction. In the absence of thiol, catalyzes gamma-elimination to form 2-oxobutanoate, succinate and ammonia. This chain is Cystathionine gamma-synthase (metB), found in Mycobacterium leprae (strain TN).